Here is a 309-residue protein sequence, read N- to C-terminus: MNEAEMLFSITVPGSTANLGPGFDSVGMALSRYLKLSVFRNDEWQFSAETETVAGIPQGTDNLIYQVAKRTADRYQKELPPAHVKVWSDIPLARGLGSSAAAIVAAIELADELCGLQLSESDKLHLASLEEGHPDNAAASLAGGLVIGLHEEGETHIVRVAEADIDVVAVIPFYEVLTRDARDVLPKELPYRHAVKASAVSNLLVAAIMSNDWALAGKMMRKDILHQPYRAMLVPELSKVEHAAEMKGAYGTALSGAGPTILVLIEKGKGEELRKQLSEHFPHCEIAALTVPSEGSVIERNPLEQVKSV.

P91–A101 serves as a coordination point for ATP.

This sequence belongs to the GHMP kinase family. Homoserine kinase subfamily.

It is found in the cytoplasm. The catalysed reaction is L-homoserine + ATP = O-phospho-L-homoserine + ADP + H(+). The protein operates within amino-acid biosynthesis; L-threonine biosynthesis; L-threonine from L-aspartate: step 4/5. Its function is as follows. Catalyzes the ATP-dependent phosphorylation of L-homoserine to L-homoserine phosphate. The sequence is that of Homoserine kinase from Bacillus velezensis (strain DSM 23117 / BGSC 10A6 / LMG 26770 / FZB42) (Bacillus amyloliquefaciens subsp. plantarum).